A 341-amino-acid chain; its full sequence is Probable galacturonosyltransferase-like 2 (341 aa).

Topologically, residues Met1–Lys4 are cytoplasmic. The chain crosses the membrane as a helical; Signal-anchor for type II membrane protein span at residues Phe5–Gly22. At Glu23–Ser341 the chain is on the lumenal side. The N-linked (GlcNAc...) asparagine glycan is linked to Asn190.

Belongs to the glycosyltransferase 8 family.

Its subcellular location is the golgi apparatus membrane. Its pathway is glycan metabolism; pectin biosynthesis. May be involved in pectin and/or xylans biosynthesis in cell walls. The sequence is that of Probable galacturonosyltransferase-like 2 (GATL2) from Arabidopsis thaliana (Mouse-ear cress).